Consider the following 314-residue polypeptide: Lipoyl synthase (314 aa).

Residues Cys40, Cys45, Cys51, Cys67, Cys71, Cys74, and Ser280 each coordinate [4Fe-4S] cluster. The 217-residue stretch at 53–269 (SERKTATFMI…KNIALEKGFS (217 aa)) folds into the Radical SAM core domain.

This sequence belongs to the radical SAM superfamily. Lipoyl synthase family. [4Fe-4S] cluster serves as cofactor.

The protein resides in the cytoplasm. The catalysed reaction is [[Fe-S] cluster scaffold protein carrying a second [4Fe-4S](2+) cluster] + N(6)-octanoyl-L-lysyl-[protein] + 2 oxidized [2Fe-2S]-[ferredoxin] + 2 S-adenosyl-L-methionine + 4 H(+) = [[Fe-S] cluster scaffold protein] + N(6)-[(R)-dihydrolipoyl]-L-lysyl-[protein] + 4 Fe(3+) + 2 hydrogen sulfide + 2 5'-deoxyadenosine + 2 L-methionine + 2 reduced [2Fe-2S]-[ferredoxin]. The protein operates within protein modification; protein lipoylation via endogenous pathway; protein N(6)-(lipoyl)lysine from octanoyl-[acyl-carrier-protein]. In terms of biological role, catalyzes the radical-mediated insertion of two sulfur atoms into the C-6 and C-8 positions of the octanoyl moiety bound to the lipoyl domains of lipoate-dependent enzymes, thereby converting the octanoylated domains into lipoylated derivatives. The sequence is that of Lipoyl synthase from Oceanobacillus iheyensis (strain DSM 14371 / CIP 107618 / JCM 11309 / KCTC 3954 / HTE831).